A 1133-amino-acid polypeptide reads, in one-letter code: Sterol regulatory element-binding protein 1 (1133 aa).

Positions 1–60 (MDELPFGEAAVEQALDELGELDAALLTDIQDMLQLINNQDSDFPGLFDSPYAGGGAGDTE) are transcriptional activation (acidic). At 1 to 476 (MDELPFGEAA…HSHGMLDRSR (476 aa)) the chain is on the cytoplasmic side. A 9aaTAD motif is present at residues 27–35 (TDIQDMLQL). Residues 46–78 (LFDSPYAGGGAGDTEPTSPGANSPESLSSPASL) are disordered. Low complexity predominate over residues 68-78 (SPESLSSPASL). Ser97 and Ser116 each carry phosphoserine. The tract at residues 131-219 (LQPPAAQPSP…PLPASTAPRT (89 aa)) is disordered. A compositionally biased stretch (polar residues) spans 165–180 (SLPSGFSGTLPGNTQQ). Low complexity-rich tracts occupy residues 181-191 (PPSSLSLASAP) and 203-217 (QSSA…STAP). The segment at 227 to 486 (QRVPVVLQPH…LALCALVFLC (260 aa)) is interaction with LMNA. Residues 317 to 367 (EKRTAHNAIEKRYRSSINDKIVELKDLVVGTEAKLNKSAVLRKAIDYIRFL) form the bHLH domain. 2 positions are modified to phosphoserine; by SIK1: Ser331 and Ser332. A leucine-zipper region spans residues 367-388 (LQHSNQKLKQENLALRNAAHKS). Ser390 bears the Phosphoserine; by AMPK mark. Position 396 is a phosphoserine; by SIK1 (Ser396). The segment at 415–456 (VVDTLTPPPSDAGSPSQSSPLSLGSRGSSSGGSDSEPDSPVF) is disordered. The span at 425–454 (DAGSPSQSSPLSLGSRGSSSGGSDSEPDSP) shows a compositional bias: low complexity. At Ser449 the chain carries Phosphoserine. Residues 477-497 (LALCALVFLCLTCNPLASLFG) form a helical membrane-spanning segment. Residues 498-535 (WGIPGPSSASGAHHSSGRSMLEAESRDGSNWTQWLLPP) are Lumenal-facing. The helical transmembrane segment at 536–556 (LVWLANGLLVLACLALLFVYG) threads the bilayer. Topologically, residues 557–1133 (EPVTRPHTSP…LGGGTTVTSS (577 aa)) are cytoplasmic. Ser1046 is modified (phosphoserine).

This sequence belongs to the SREBP family. As to quaternary structure, efficient DNA binding of the soluble transcription factor fragment requires dimerization with another bHLH protein. Interacts with CEBPA, the interaction produces a transcriptional synergy. Interacts with LMNA. Forms a tight complex with SCAP, the SCAP-SREBP complex, in the endoplasmic reticulum membrane and the Golgi apparatus. Interacts with PAQR3; the interaction anchors the SCAP-SREBP complex to the Golgi apparatus in low cholesterol conditions. In terms of processing, processed in the Golgi apparatus, releasing the protein from the membrane. At low cholesterol the SCAP-SREBP complex is recruited into COPII vesicles for export from the endoplasmic reticulum. In the Golgi, complex SREBPs are cleaved sequentially by site-1 (MBTPS1, S1P) and site-2 (MBTPS2, S2P) proteases. The first cleavage by site-1 protease occurs within the luminal loop, the second cleavage by site-2 protease occurs within the first transmembrane domain, releasing the transcription factor from the Golgi membrane. Post-translationally, phosphorylated by AMPK, leading to suppress protein processing and nuclear translocation, and repress target gene expression. Phosphorylation at Ser-396 by SIK1 represses activity possibly by inhibiting DNA-binding. SCAP-free SREBF1 is ubiquitinated by the BCR(ARMC5) complex, leading to its degradation. In terms of processing, ubiquitinated; the nuclear form has a rapid turnover and is rapidly ubiquitinated and degraded by the proteasome in the nucleus.

Its subcellular location is the endoplasmic reticulum membrane. It localises to the golgi apparatus membrane. It is found in the cytoplasmic vesicle. The protein localises to the COPII-coated vesicle membrane. The protein resides in the nucleus. With respect to regulation, activation by cleavage is down-regulated upon activation of SIRT3-dependent PRKAA1/AMPK-alpha signaling cascade which leads to inhibition of ATP-consuming lipogenesis to restore cellular energy balance. Functionally, precursor of the transcription factor form (Processed sterol regulatory element-binding protein 1), which is embedded in the endoplasmic reticulum membrane. Low sterol concentrations promote processing of this form, releasing the transcription factor form that translocates into the nucleus and activates transcription of genes involved in cholesterol biosynthesis and lipid homeostasis. Key transcription factor that regulates expression of genes involved in cholesterol biosynthesis and lipid homeostasis. Binds to the sterol regulatory element 1 (SRE-1) (5'-ATCACCCCAC-3'). Has dual sequence specificity binding to both an E-box motif (5'-ATCACGTGA-3') and to SRE-1 (5'-ATCACCCCAC-3'). Regulates the promoters of genes involved in cholesterol biosynthesis and the LDL receptor (LDLR) pathway of sterol regulation. This Cricetulus griseus (Chinese hamster) protein is Sterol regulatory element-binding protein 1.